Reading from the N-terminus, the 662-residue chain is Intracellular exo-alpha-(1-&gt;5)-L-arabinofuranosidase (662 aa).

The alpha-L-arabinofuranose site is built by glutamate 27, asparagine 72, and asparagine 174. The Proton donor/acceptor role is filled by glutamate 175. The alpha-L-arabinofuranose site is built by tyrosine 246, glutamate 294, and glutamine 352. The Nucleophile role is filled by glutamate 294. Disordered stretches follow at residues 454–483 (LADADPDARNTLAEPERVVPHPVDGTSLRD), 497–548 (SIRC…RTAR), and 588–662 (WTRW…ARRC). The span at 519-533 (TGTPPAAPPSSSSAP) shows a compositional bias: low complexity. Positions 537–547 (PTARRSPDRTA) are enriched in basic and acidic residues. 3 stretches are compositionally biased toward low complexity: residues 590-603 (RWAPAPRSGSPSRR), 628-641 (RRSPPGSAPGTPAP), and 649-662 (AGASRGAPRTARRC).

It belongs to the glycosyl hydrolase 51 family. Homohexamer; trimer of dimers.

Its subcellular location is the cytoplasm. It carries out the reaction Hydrolysis of terminal non-reducing alpha-L-arabinofuranoside residues in alpha-L-arabinosides.. The protein operates within glycan metabolism; L-arabinan degradation. Functionally, involved in the degradation of arabinan and is a key enzyme in the complete degradation of the plant cell wall. Catalyzes the cleavage of terminal alpha-(1-&gt;5)-arabinofuranosyl bonds in different hemicellulosic homopolysaccharides (arabino-oligoxylosides, branched and debranched arabinans). It acts rapidly on the short-chain arabino-oligoxylosides from digestion of xylan with xylanases. It hydrolyzes slowly arabinan and arabinoxylan from wheat and rye flour. This chain is Intracellular exo-alpha-(1-&gt;5)-L-arabinofuranosidase, found in Streptomyces lividans.